The chain runs to 539 residues: Chaperone Ric-8A (539 aa).

Residues proline 506–aspartate 539 form a disordered region.

It belongs to the synembryn family.

The protein resides in the cytoplasm. It is found in the cell cortex. Its function is as follows. Chaperone that specifically binds and folds nascent G alpha proteins prior to G protein heterotrimer formation, promoting their stability and activity: folds GNAI1, GNAO1, GNA13 and GNAQ. Does not fold G(s) G-alpha proteins GNAS nor GNAL. Also acts as a guanine nucleotide exchange factor (GEF) for G alpha proteins by stimulating exchange of bound GDP for free GTP. The chain is Chaperone Ric-8A (ric8a) from Xenopus laevis (African clawed frog).